Consider the following 156-residue polypeptide: Holliday junction resolvase (156 aa).

The protein belongs to the RuvC family. Poxviruses-type subfamily. Requires Mg(2+) as cofactor.

Nuclease that specifically cleaves and resolves four-way DNA Holliday junctions into linear duplex products. The protein is Holliday junction resolvase of Vertebrata (FPV).